A 463-amino-acid chain; its full sequence is L-seryl-tRNA(Sec) selenium transferase (463 aa).

At Lys-295 the chain carries N6-(pyridoxal phosphate)lysine.

The protein belongs to the SelA family. In terms of assembly, homodecamer; pentamer of dimers. Binds only one seryl-tRNA(Sec) per dimer. Requires pyridoxal 5'-phosphate as cofactor.

The protein resides in the cytoplasm. The catalysed reaction is L-seryl-tRNA(Sec) + selenophosphate + H(+) = L-selenocysteinyl-tRNA(Sec) + phosphate. Its pathway is aminoacyl-tRNA biosynthesis; selenocysteinyl-tRNA(Sec) biosynthesis; selenocysteinyl-tRNA(Sec) from L-seryl-tRNA(Sec) (bacterial route): step 1/1. Its function is as follows. Converts seryl-tRNA(Sec) to selenocysteinyl-tRNA(Sec) required for selenoprotein biosynthesis. This chain is L-seryl-tRNA(Sec) selenium transferase, found in Shigella flexneri serotype 5b (strain 8401).